Reading from the N-terminus, the 397-residue chain is 2-isopropylmalate synthase 1 (397 aa).

Positions 6–268 (VIVFDTTLRD…VHGINTKEIY (263 aa)) constitute a Pyruvate carboxyltransferase domain. The Mn(2+) site is built by Asp15, His203, His205, and Asn239.

The protein belongs to the alpha-IPM synthase/homocitrate synthase family. LeuA type 1 subfamily. In terms of assembly, homodimer. Requires Mn(2+) as cofactor.

It localises to the cytoplasm. The enzyme catalyses 3-methyl-2-oxobutanoate + acetyl-CoA + H2O = (2S)-2-isopropylmalate + CoA + H(+). It participates in amino-acid biosynthesis; L-leucine biosynthesis; L-leucine from 3-methyl-2-oxobutanoate: step 1/4. Functionally, catalyzes the condensation of the acetyl group of acetyl-CoA with 3-methyl-2-oxobutanoate (2-ketoisovalerate) to form 3-carboxy-3-hydroxy-4-methylpentanoate (2-isopropylmalate). This chain is 2-isopropylmalate synthase 1, found in Caldanaerobacter subterraneus subsp. tengcongensis (strain DSM 15242 / JCM 11007 / NBRC 100824 / MB4) (Thermoanaerobacter tengcongensis).